The chain runs to 315 residues: 2,3-dihydroxyphenylpropionate/2,3-dihydroxicinnamic acid 1,2-dioxygenase (315 aa).

His-118 functions as the Proton donor in the catalytic mechanism. The active-site Proton acceptor is the His-182.

Belongs to the LigB/MhpB extradiol dioxygenase family. In terms of assembly, homotetramer. It depends on Fe(2+) as a cofactor.

It carries out the reaction 3-(2,3-dihydroxyphenyl)propanoate + O2 = (2Z,4E)-2-hydroxy-6-oxonona-2,4-dienedioate + H(+). The enzyme catalyses (2E)-3-(2,3-dihydroxyphenyl)prop-2-enoate + O2 = (2Z,4E,7E)-2-hydroxy-6-oxonona-2,4,7-trienedioate + H(+). The protein operates within aromatic compound metabolism; 3-phenylpropanoate degradation. Catalyzes the non-heme iron(II)-dependent oxidative cleavage of 2,3-dihydroxyphenylpropionic acid and 2,3-dihydroxicinnamic acid into 2-hydroxy-6-ketononadienedioate and 2-hydroxy-6-ketononatrienedioate, respectively. The polypeptide is 2,3-dihydroxyphenylpropionate/2,3-dihydroxicinnamic acid 1,2-dioxygenase (Mycolicibacterium gilvum (strain PYR-GCK) (Mycobacterium gilvum (strain PYR-GCK))).